The sequence spans 105 residues: Small ribosomal subunit protein uS10 (105 aa).

The protein belongs to the universal ribosomal protein uS10 family. As to quaternary structure, part of the 30S ribosomal subunit.

Functionally, involved in the binding of tRNA to the ribosomes. This chain is Small ribosomal subunit protein uS10, found in Rickettsia prowazekii (strain Madrid E).